The chain runs to 360 residues: Sensor histidine kinase LiaS (360 aa).

Residues 1 to 15 are Cytoplasmic-facing; sequence MRKKMLASLQWRAIR. A helical transmembrane segment spans residues 16–36; that stretch reads MTTGISLLLFVCLISFMMFYY. At 37–47 the chain is on the extracellular side; sequence RLDPLVLLSSS. The chain crosses the membrane as a helical span at residues 48–68; sequence WFGIPFILILLLISVTVGFAS. The Cytoplasmic segment spans residues 69 to 360; sequence GYMYGNRLKT…ENERDSSIID (292 aa). The HAMP domain occupies 74–126; sequence NRLKTRIDTLIESILTFENGNFAYRIPPLGDDEIGLAADQLNEMAKRVELQVA. One can recognise a Histidine kinase domain in the interval 153–346; that stretch reads RLARDLHDAV…QIEVKVPIFP (194 aa). His159 is subject to Phosphohistidine; by autocatalysis.

Its subcellular location is the cell membrane. It catalyses the reaction ATP + protein L-histidine = ADP + protein N-phospho-L-histidine.. Member of the two-component regulatory system LiaS/LiaR probably involved in response to a subset of cell wall-active antibiotics that interfere with the lipid II cycle in the cytoplasmic membrane (bacitracin, nisin, ramoplanin and vancomycin). Also seems to be involved in response to cationic antimicrobial peptides and secretion stress. Activates probably LiaR by phosphorylation. The protein is Sensor histidine kinase LiaS (liaS) of Bacillus subtilis (strain 168).